We begin with the raw amino-acid sequence, 503 residues long: Maturase K (503 aa).

The protein belongs to the intron maturase 2 family. MatK subfamily.

The protein localises to the plastid. The protein resides in the chloroplast. Usually encoded in the trnK tRNA gene intron. Probably assists in splicing its own and other chloroplast group II introns. This chain is Maturase K, found in Rosa gigantea (Giant tea rose).